The primary structure comprises 649 residues: Acetyl-coenzyme A synthetase (649 aa).

Residues 191 to 194 (RGGR), threonine 312, and asparagine 336 contribute to the CoA site. ATP is bound by residues 388-390 (GEP), 412-417 (DTWWQT), aspartate 501, and arginine 516. Serine 524 serves as a coordination point for CoA. Arginine 527 is an ATP binding site. Residues valine 538, histidine 540, and valine 543 each coordinate Mg(2+). Arginine 585 contacts CoA. Lysine 610 is modified (N6-acetyllysine).

It belongs to the ATP-dependent AMP-binding enzyme family. Mg(2+) serves as cofactor. In terms of processing, acetylated. Deacetylation by the SIR2-homolog deacetylase activates the enzyme.

It catalyses the reaction acetate + ATP + CoA = acetyl-CoA + AMP + diphosphate. In terms of biological role, catalyzes the conversion of acetate into acetyl-CoA (AcCoA), an essential intermediate at the junction of anabolic and catabolic pathways. AcsA undergoes a two-step reaction. In the first half reaction, AcsA combines acetate with ATP to form acetyl-adenylate (AcAMP) intermediate. In the second half reaction, it can then transfer the acetyl group from AcAMP to the sulfhydryl group of CoA, forming the product AcCoA. The polypeptide is Acetyl-coenzyme A synthetase (Marinobacter nauticus (strain ATCC 700491 / DSM 11845 / VT8) (Marinobacter aquaeolei)).